The following is a 795-amino-acid chain: Arcadin-4 (795 aa).

Coiled coils occupy residues 205–253 (YSGL…HEQI), 323–412 (YDAL…YTSL), and 450–618 (FGGV…LKKR).

The protein localises to the cytoplasm. Its subcellular location is the cytoskeleton. Its function is as follows. Part of an actin-like archaeal cytoskeleton. The sequence is that of Arcadin-4 from Pyrobaculum calidifontis (strain DSM 21063 / JCM 11548 / VA1).